The primary structure comprises 34 residues: Photosystem I reaction center subunit XII (34 aa).

The chain crosses the membrane as a helical span at residues 10–32; that stretch reads VFVALVVAAHAAVLALRLSISLY.

The protein belongs to the PsaM family.

It localises to the cellular thylakoid membrane. In Parasynechococcus marenigrum (strain WH8102), this protein is Photosystem I reaction center subunit XII.